The following is a 589-amino-acid chain: Probable translation initiation factor IF-2 (589 aa).

In terms of domain architecture, tr-type G spans 3–224 (VRSPFVVVMG…AGVSQRFIPR (222 aa)). A G1 region spans residues 12–19 (GHVDVGKT). 12-19 (GHVDVGKT) contacts GTP. The tract at residues 37 to 41 (MITQH) is G2. Residues 78–81 (DTPG) form a G3 region. Residues 78 to 82 (DTPGH) and 132 to 135 (NKLD) each bind GTP. Residues 132–135 (NKLD) form a G4 region. Residues 200 to 202 (SAV) are G5.

Belongs to the TRAFAC class translation factor GTPase superfamily. Classic translation factor GTPase family. IF-2 subfamily.

Its function is as follows. Function in general translation initiation by promoting the binding of the formylmethionine-tRNA to ribosomes. Seems to function along with eIF-2. In Pyrobaculum neutrophilum (strain DSM 2338 / JCM 9278 / NBRC 100436 / V24Sta) (Thermoproteus neutrophilus), this protein is Probable translation initiation factor IF-2.